Consider the following 215-residue polypeptide: Pyrophosphatase PpaX (215 aa).

Catalysis depends on D9, which acts as the Nucleophile.

This sequence belongs to the HAD-like hydrolase superfamily. PpaX family. Requires Mg(2+) as cofactor.

It catalyses the reaction diphosphate + H2O = 2 phosphate + H(+). Hydrolyzes pyrophosphate formed during P-Ser-HPr dephosphorylation by HPrK/P. Might play a role in controlling the intracellular pyrophosphate pool. The chain is Pyrophosphatase PpaX from Halalkalibacterium halodurans (strain ATCC BAA-125 / DSM 18197 / FERM 7344 / JCM 9153 / C-125) (Bacillus halodurans).